Reading from the N-terminus, the 359-residue chain is Phospho-N-acetylmuramoyl-pentapeptide-transferase (359 aa).

Helical transmembrane passes span 3–23 (QILIAVAIAVAVSILLTPVLI), 55–75 (VAIVAGIWASYFGTHLVGVVI), 84–104 (GLLVLGLATALGAVGFLDDLI), 117–137 (TAKTVGILVAAVLFGVLALQF), 156–176 (IATVTLAPAVFVLFCVVVVSA), 190–210 (LAAGAMAMVCAAYVLITFWQF), 231–251 (LAIIAAATAGACIGFLWWNAA), 255–275 (IFMGDTGSLALGGIIAGLSVT), 283–303 (VVLGALFVAEVTSVVVQILAF), and 330–350 (VIIRFWLLTAIACGLGVALFY).

It belongs to the glycosyltransferase 4 family. MraY subfamily. Requires Mg(2+) as cofactor.

The protein resides in the cell membrane. It catalyses the reaction UDP-N-acetyl-alpha-D-muramoyl-L-alanyl-gamma-D-glutamyl-meso-2,6-diaminopimeloyl-D-alanyl-D-alanine + di-trans,octa-cis-undecaprenyl phosphate = di-trans,octa-cis-undecaprenyl diphospho-N-acetyl-alpha-D-muramoyl-L-alanyl-D-glutamyl-meso-2,6-diaminopimeloyl-D-alanyl-D-alanine + UMP. The protein operates within cell wall biogenesis; peptidoglycan biosynthesis. Its function is as follows. Catalyzes the initial step of the lipid cycle reactions in the biosynthesis of the cell wall peptidoglycan: transfers peptidoglycan precursor phospho-MurNAc-pentapeptide from UDP-MurNAc-pentapeptide onto the lipid carrier undecaprenyl phosphate, yielding undecaprenyl-pyrophosphoryl-MurNAc-pentapeptide, known as lipid I. This chain is Phospho-N-acetylmuramoyl-pentapeptide-transferase, found in Mycolicibacterium vanbaalenii (strain DSM 7251 / JCM 13017 / BCRC 16820 / KCTC 9966 / NRRL B-24157 / PYR-1) (Mycobacterium vanbaalenii).